The primary structure comprises 495 residues: Meiosis-specific nuclear structural protein 1 (495 aa).

The tract at residues 1-314 (MASKRRNMSC…KLEEMLRQRE (314 aa)) is interaction with BBOF1. A coiled-coil region spans residues 59–410 (LLQNEQFELD…QLEHRRAVEK (352 aa)). Phosphotyrosine is present on Tyr-188.

It belongs to the MNS1 family. In terms of assembly, able to form oligomers. Microtubule inner protein component of sperm flagellar doublet microtubules. Interacts with ODAD1. Interacts with BBOF1.

It localises to the nucleus. It is found in the cytoplasm. The protein localises to the cytoskeleton. The protein resides in the cilium axoneme. Its subcellular location is the flagellum axoneme. Functionally, microtubule inner protein (MIP) part of the dynein-decorated doublet microtubules (DMTs) in cilia axoneme, which is required for motile cilia beating. May play a role in the control of meiotic division and germ cell differentiation through regulation of pairing and recombination during meiosis. Required for sperm flagella assembly. May play a role in the assembly and function of the outer dynein arm-docking complex (ODA-DC). ODA-DC mediates outer dynein arms (ODA) binding onto the axonemal doublet microtubules. The polypeptide is Meiosis-specific nuclear structural protein 1 (MNS1) (Macaca fascicularis (Crab-eating macaque)).